Here is a 144-residue protein sequence, read N- to C-terminus: Large ribosomal subunit protein uL15 (144 aa).

The disordered stretch occupies residues 1–53; sequence MRLNTLSPAVGAKSAPKRVGRGIGSGLGKTAGRGHKGQKSRSGGGVRPGFEGG. Gly residues-rich tracts occupy residues 21 to 31 and 42 to 52; these read RGIGSGLGKTA and SGGGVRPGFEG.

Belongs to the universal ribosomal protein uL15 family. As to quaternary structure, part of the 50S ribosomal subunit.

Binds to the 23S rRNA. The protein is Large ribosomal subunit protein uL15 of Shewanella amazonensis (strain ATCC BAA-1098 / SB2B).